We begin with the raw amino-acid sequence, 127 residues long: uncharacterized protein (127 aa).

In terms of domain architecture, VOC spans methionine 1–lysine 127.

This sequence belongs to the glyoxalase I family.

This is an uncharacterized protein from Bacillus subtilis (strain 168).